Reading from the N-terminus, the 151-residue chain is Acidic phospholipase A2 3 (151 aa).

The signal sequence occupies residues 1–27 (MYPAHLLVLLAVCVSLLGAASIPARPL). 7 cysteine pairs are disulfide-bonded: cysteine 38-cysteine 104, cysteine 54-cysteine 151, cysteine 56-cysteine 72, cysteine 71-cysteine 132, cysteine 78-cysteine 125, cysteine 88-cysteine 118, and cysteine 111-cysteine 123. Residues tyrosine 55, glycine 57, and glycine 59 each coordinate Ca(2+). Residue histidine 75 is part of the active site. Residue aspartate 76 participates in Ca(2+) binding. The active site involves aspartate 126.

Belongs to the phospholipase A2 family. Group I subfamily. D49 sub-subfamily. Ca(2+) is required as a cofactor. In terms of tissue distribution, expressed by the venom gland.

Its subcellular location is the secreted. The catalysed reaction is a 1,2-diacyl-sn-glycero-3-phosphocholine + H2O = a 1-acyl-sn-glycero-3-phosphocholine + a fatty acid + H(+). Its function is as follows. PLA2 catalyzes the calcium-dependent hydrolysis of the 2-acyl groups in 3-sn-phosphoglycerides. The chain is Acidic phospholipase A2 3 from Tropidechis carinatus (Australian rough-scaled snake).